Reading from the N-terminus, the 131-residue chain is uncharacterized protein (131 aa).

The span at 31–40 shows a compositional bias: low complexity; the sequence is AAATSRAAPL. Residues 31-131 form a disordered region; that stretch reads AAATSRAAPL…EAKTEQTKTP (101 aa).

This is an uncharacterized protein from Homo sapiens (Human).